A 193-amino-acid chain; its full sequence is MQLLEERILTDGNILGENILKVDNFLTHQVDYRSMKAIGKVFAQKYAEAGITKVVTIEASGIAPAVYAAEAMDVPMIFAKKHKNITMTEGILTAEVYSFTKQVTSTVSIAGKFLSKEDKVLIIDDFLANGQAAKGLIEIIGQAGAQVVGVGIVIEKSFQDGRRLIEDMGIEVTSLARIKNFENGNLNFLEADA.

2 residues coordinate xanthine: Leu-20 and Thr-27. Position 128–132 (128–132) interacts with 5-phospho-alpha-D-ribose 1-diphosphate; it reads ANGQA. Xanthine is bound at residue Lys-156.

Belongs to the purine/pyrimidine phosphoribosyltransferase family. Xpt subfamily. Homodimer.

Its subcellular location is the cytoplasm. The catalysed reaction is XMP + diphosphate = xanthine + 5-phospho-alpha-D-ribose 1-diphosphate. The protein operates within purine metabolism; XMP biosynthesis via salvage pathway; XMP from xanthine: step 1/1. Functionally, converts the preformed base xanthine, a product of nucleic acid breakdown, to xanthosine 5'-monophosphate (XMP), so it can be reused for RNA or DNA synthesis. The protein is Xanthine phosphoribosyltransferase of Streptococcus pyogenes serotype M49 (strain NZ131).